The chain runs to 391 residues: Zinc finger protein ubi-d4 (391 aa).

An N-acetylalanine modification is found at Ala2. Glycyl lysine isopeptide (Lys-Gly) (interchain with G-Cter in SUMO2) cross-links involve residues Lys10, Lys99, Lys107, and Lys108. 2 disordered regions span residues 79-146 and 165-196; these read WRKK…LGEF and DDLD…ARKK. 2 stretches are compositionally biased toward basic and acidic residues: residues 100–110 and 126–140; these read PDTDQTLKKEG and DPLE…RVDD. Position 142 is a phosphoserine (Ser142). Over residues 165–174 the composition is skewed to acidic residues; it reads DDLDDEDYEE. Residue Tyr172 is modified to Phosphotyrosine. The residue at position 176 (Thr176) is a Phosphothreonine. Glycyl lysine isopeptide (Lys-Gly) (interchain with G-Cter in SUMO2) cross-links involve residues Lys178 and Lys196. Residue Ser200 is modified to Phosphoserine. A C2H2-type zinc finger spans residues 209–232; sequence YACDICGKRYKNRPGLSYHYAHSH. Positions 233–266 are disordered; the sequence is LAEEEGEDKEDSQPPTPVSQRSEEQKSKKGPDGL. Ser244 bears the Phosphoserine mark. A compositionally biased stretch (basic and acidic residues) spans 253 to 263; that stretch reads RSEEQKSKKGP. 2 PHD-type zinc fingers span residues 270-330 and 327-377; these read NNYC…CKCC and CKCC…CLDL. A Phosphoserine modification is found at Ser280. Lys281 participates in a covalent cross-link: Glycyl lysine isopeptide (Lys-Gly) (interchain with G-Cter in SUMO2).

This sequence belongs to the requiem/DPF family. As to quaternary structure, interacts with the nucleosomes, in particular nucleosomes bearing histone H3 crotonylated at 'Lys-14' (H3K14cr) for which DPF2 has high affinity. Also interacts (via PHD-type zinc finger domains) with histone H3 butyrylated at 'Lys-14' (H3K14bu), histone H3 propionylated at 'Lys-14' (H3K14pr), and histone H3 acetylated at 'Lys-14' (H3K14ac). Interacts with histone H3 acetylated at 'Lys-9' (H3K9ac), histone H3 di-methylated at 'Lys-9' (H3K9me2), and histone H3 tri-methylated at 'Lys-9' (H3K9me3). Interacts with histone H4 acetylated at 'Lys-12' (H4K12ac). Interacts with histone H4 acetylated at 'Lys-16' (H4K16ac). Interacts with SWI/SNF complex components. Interacts with SMARCA2, SMARCA4, SMARCB1 and SMARCD1. Interacts with SMARCC1, SMARCC2 and ACTL6A. Interacts with RUNX1. In terms of tissue distribution, ubiquitous.

Its subcellular location is the nucleus. The protein localises to the cytoplasm. Its function is as follows. Plays an active role in transcriptional regulation by binding modified histones H3 and H4. Is a negative regulator of myeloid differentiation of hematopoietic progenitor cells. Might also have a role in the development and maturation of lymphoid cells. Involved in the regulation of non-canonical NF-kappa-B pathway. The polypeptide is Zinc finger protein ubi-d4 (DPF2) (Homo sapiens (Human)).